The sequence spans 204 residues: Holliday junction branch migration complex subunit RuvA (204 aa).

The interval 1–64 (MISRMKGIIL…EDAQLLYGFH (64 aa)) is domain I. The interval 65 to 143 (HPKERAMFSE…NLNKNLFKST (79 aa)) is domain II. Residues 144-155 (ADHMLSSVSTDL) form a flexible linker region. Positions 156–204 (SAKSAEAEAISALISLGYKPQEAAQLIKNIAQPDLDSQALIKHALRSTL) are domain III.

The protein belongs to the RuvA family. As to quaternary structure, homotetramer. Forms an RuvA(8)-RuvB(12)-Holliday junction (HJ) complex. HJ DNA is sandwiched between 2 RuvA tetramers; dsDNA enters through RuvA and exits via RuvB. An RuvB hexamer assembles on each DNA strand where it exits the tetramer. Each RuvB hexamer is contacted by two RuvA subunits (via domain III) on 2 adjacent RuvB subunits; this complex drives branch migration. In the full resolvosome a probable DNA-RuvA(4)-RuvB(12)-RuvC(2) complex forms which resolves the HJ.

It localises to the cytoplasm. Its function is as follows. The RuvA-RuvB-RuvC complex processes Holliday junction (HJ) DNA during genetic recombination and DNA repair, while the RuvA-RuvB complex plays an important role in the rescue of blocked DNA replication forks via replication fork reversal (RFR). RuvA specifically binds to HJ cruciform DNA, conferring on it an open structure. The RuvB hexamer acts as an ATP-dependent pump, pulling dsDNA into and through the RuvAB complex. HJ branch migration allows RuvC to scan DNA until it finds its consensus sequence, where it cleaves and resolves the cruciform DNA. The polypeptide is Holliday junction branch migration complex subunit RuvA (Hamiltonella defensa subsp. Acyrthosiphon pisum (strain 5AT)).